The chain runs to 181 residues: Cytochrome c-type biogenesis protein CcmE (181 aa).

The Cytoplasmic portion of the chain corresponds to 1–8 (MNPRRKSR). A helical; Signal-anchor for type II membrane protein membrane pass occupies residues 9 to 29 (LKVVVSIIFGVAVAAGLTLYA). Residues 30 to 181 (LSQNIDLFYT…TLKTLQGEAN (152 aa)) lie on the Periplasmic side of the membrane. Positions 131 and 135 each coordinate heme. Basic and acidic residues-rich tracts occupy residues 135 to 148 (YMPP…KEQH) and 156 to 166 (ADLKGTSARDK). The interval 135–166 (YMPPELGDKLKEQHGAAGISEADLKGTSARDK) is disordered.

It belongs to the CcmE/CycJ family.

Its subcellular location is the cell inner membrane. Heme chaperone required for the biogenesis of c-type cytochromes. Transiently binds heme delivered by CcmC and transfers the heme to apo-cytochromes in a process facilitated by CcmF and CcmH. The sequence is that of Cytochrome c-type biogenesis protein CcmE from Actinobacillus pleuropneumoniae serotype 7 (strain AP76).